Consider the following 495-residue polypeptide: GTPase Der (495 aa).

2 EngA-type G domains span residues 3–166 and 208–381; these read PVVA…VQDE and IKLA…SCAT. Residues 9–16, 56–60, 118–121, 214–221, 261–265, and 326–329 each bind GTP; these read GRPNVGKS, DTGGI, NKTD, DTAGV, and NKWD. The KH-like domain maps to 382–466; that stretch reads RRVSTAMLTR…PIRIQFKEGE (85 aa).

This sequence belongs to the TRAFAC class TrmE-Era-EngA-EngB-Septin-like GTPase superfamily. EngA (Der) GTPase family. As to quaternary structure, associates with the 50S ribosomal subunit.

GTPase that plays an essential role in the late steps of ribosome biogenesis. The sequence is that of GTPase Der from Pectobacterium atrosepticum (strain SCRI 1043 / ATCC BAA-672) (Erwinia carotovora subsp. atroseptica).